We begin with the raw amino-acid sequence, 334 residues long: Protein-methionine-sulfoxide reductase catalytic subunit MsrP (334 aa).

Residues 1–44 constitute a signal peptide (tat-type signal); the sequence is MKKKQFLKESDVTAESVFFMKRRQVLKALGISAAALSLPHAAHA. Residues Asn88, 91–92, Cys146, Thr181, Asn233, Arg238, and 249–251 contribute to the Mo-molybdopterin site; these read YE and GIK.

Belongs to the MsrP family. As to quaternary structure, heterodimer of a catalytic subunit (MsrP) and a heme-binding subunit (MsrQ). Mo-molybdopterin serves as cofactor. In terms of processing, predicted to be exported by the Tat system. The position of the signal peptide cleavage has not been experimentally proven.

It localises to the periplasm. The catalysed reaction is L-methionyl-[protein] + a quinone + H2O = L-methionyl-(S)-S-oxide-[protein] + a quinol. It catalyses the reaction L-methionyl-[protein] + a quinone + H2O = L-methionyl-(R)-S-oxide-[protein] + a quinol. Its function is as follows. Part of the MsrPQ system that repairs oxidized periplasmic proteins containing methionine sulfoxide residues (Met-O), using respiratory chain electrons. Thus protects these proteins from oxidative-stress damage caused by reactive species of oxygen and chlorine generated by the host defense mechanisms. MsrPQ is essential for the maintenance of envelope integrity under bleach stress, rescuing a wide series of structurally unrelated periplasmic proteins from methionine oxidation, including the primary periplasmic chaperone SurA and the lipoprotein Pal. The catalytic subunit MsrP is non-stereospecific, being able to reduce both (R-) and (S-) diastereoisomers of methionine sulfoxide. The protein is Protein-methionine-sulfoxide reductase catalytic subunit MsrP of Escherichia coli O139:H28 (strain E24377A / ETEC).